The following is a 349-amino-acid chain: Nicotinate-nucleotide--dimethylbenzimidazole phosphoribosyltransferase (349 aa).

Glu-315 acts as the Proton acceptor in catalysis.

It belongs to the CobT family.

It catalyses the reaction 5,6-dimethylbenzimidazole + nicotinate beta-D-ribonucleotide = alpha-ribazole 5'-phosphate + nicotinate + H(+). It participates in nucleoside biosynthesis; alpha-ribazole biosynthesis; alpha-ribazole from 5,6-dimethylbenzimidazole: step 1/2. Functionally, catalyzes the synthesis of alpha-ribazole-5'-phosphate from nicotinate mononucleotide (NAMN) and 5,6-dimethylbenzimidazole (DMB). The chain is Nicotinate-nucleotide--dimethylbenzimidazole phosphoribosyltransferase from Variovorax paradoxus (strain S110).